We begin with the raw amino-acid sequence, 252 residues long: Ribosomal RNA small subunit methyltransferase J (252 aa).

Residues 101–102 (RD), 117–118 (ER), 153–154 (SS), and Asp171 each bind S-adenosyl-L-methionine.

It belongs to the methyltransferase superfamily. RsmJ family.

The protein resides in the cytoplasm. The enzyme catalyses guanosine(1516) in 16S rRNA + S-adenosyl-L-methionine = N(2)-methylguanosine(1516) in 16S rRNA + S-adenosyl-L-homocysteine + H(+). Its function is as follows. Specifically methylates the guanosine in position 1516 of 16S rRNA. In Pseudoalteromonas translucida (strain TAC 125), this protein is Ribosomal RNA small subunit methyltransferase J.